The sequence spans 370 residues: Dual-specificity RNA methyltransferase RlmN (370 aa).

E93 acts as the Proton acceptor in catalysis. A Radical SAM core domain is found at 99-337 (EEGRGTLCVS…VTTVRKTRGD (239 aa)). A disulfide bond links C106 and C343. 3 residues coordinate [4Fe-4S] cluster: C113, C117, and C120. S-adenosyl-L-methionine contacts are provided by residues 167–168 (GE), S199, 221–223 (SLH), and N300. C343 acts as the S-methylcysteine intermediate in catalysis.

Belongs to the radical SAM superfamily. RlmN family. It depends on [4Fe-4S] cluster as a cofactor.

It localises to the cytoplasm. The enzyme catalyses adenosine(2503) in 23S rRNA + 2 reduced [2Fe-2S]-[ferredoxin] + 2 S-adenosyl-L-methionine = 2-methyladenosine(2503) in 23S rRNA + 5'-deoxyadenosine + L-methionine + 2 oxidized [2Fe-2S]-[ferredoxin] + S-adenosyl-L-homocysteine. It carries out the reaction adenosine(37) in tRNA + 2 reduced [2Fe-2S]-[ferredoxin] + 2 S-adenosyl-L-methionine = 2-methyladenosine(37) in tRNA + 5'-deoxyadenosine + L-methionine + 2 oxidized [2Fe-2S]-[ferredoxin] + S-adenosyl-L-homocysteine. Functionally, specifically methylates position 2 of adenine 2503 in 23S rRNA and position 2 of adenine 37 in tRNAs. m2A2503 modification seems to play a crucial role in the proofreading step occurring at the peptidyl transferase center and thus would serve to optimize ribosomal fidelity. In Francisella tularensis subsp. novicida (strain U112), this protein is Dual-specificity RNA methyltransferase RlmN.